The chain runs to 510 residues: NAD(P)H-quinone oxidoreductase subunit 2 A, chloroplastic (510 aa).

The next 12 helical transmembrane spans lie at 31–51 (FIFP…IDLT), 59–79 (WFYF…LFRW), 99–119 (IFQF…VEYI), 124–144 (MAIT…MFLC), 149–169 (LITI…LSGY), 183–203 (YLLM…WLYG), 229–249 (ISIA…PAPF), 295–315 (WHLL…LLAI), 323–343 (MLAY…IVGD), 354–374 (YMLF…LFGL), 395–415 (ALSL…AGFF), and 418–438 (LYLF…IGLL).

It belongs to the complex I subunit 2 family. As to quaternary structure, NDH is composed of at least 16 different subunits, 5 of which are encoded in the nucleus.

The protein resides in the plastid. Its subcellular location is the chloroplast thylakoid membrane. It catalyses the reaction a plastoquinone + NADH + (n+1) H(+)(in) = a plastoquinol + NAD(+) + n H(+)(out). It carries out the reaction a plastoquinone + NADPH + (n+1) H(+)(in) = a plastoquinol + NADP(+) + n H(+)(out). In terms of biological role, NDH shuttles electrons from NAD(P)H:plastoquinone, via FMN and iron-sulfur (Fe-S) centers, to quinones in the photosynthetic chain and possibly in a chloroplast respiratory chain. The immediate electron acceptor for the enzyme in this species is believed to be plastoquinone. Couples the redox reaction to proton translocation, and thus conserves the redox energy in a proton gradient. This chain is NAD(P)H-quinone oxidoreductase subunit 2 A, chloroplastic, found in Oryza nivara (Indian wild rice).